The chain runs to 215 residues: Protein-L-isoaspartate O-methyltransferase 1 (215 aa).

The active site involves Ser61.

This sequence belongs to the methyltransferase superfamily. L-isoaspartyl/D-aspartyl protein methyltransferase family.

It localises to the cytoplasm. It catalyses the reaction [protein]-L-isoaspartate + S-adenosyl-L-methionine = [protein]-L-isoaspartate alpha-methyl ester + S-adenosyl-L-homocysteine. Its function is as follows. Catalyzes the methyl esterification of L-isoaspartyl residues in peptides and proteins that result from spontaneous decomposition of normal L-aspartyl and L-asparaginyl residues. It plays a role in the repair and/or degradation of damaged proteins. This chain is Protein-L-isoaspartate O-methyltransferase 1, found in Pelobacter propionicus (strain DSM 2379 / NBRC 103807 / OttBd1).